Consider the following 1674-residue polypeptide: Maestro heat-like repeat-containing protein family member 2A (1674 aa).

Residues Met1–Leu26 form a disordered region. HEAT repeat units follow at residues Ala73–Gln96, Arg97–Glu133, Met195–Phe234, Leu254–Pro292, Ser382–Pro419, Arg424–Gln461, Pro573–Pro612, Ala615–Ala641, Trp642–Ser679, Lys739–Lys776, Gly993–Ser1030, Asp1221–Pro1263, Glu1381–Lys1420, and Leu1627–Ser1674.

The protein is Maestro heat-like repeat-containing protein family member 2A (MROH2A) of Homo sapiens (Human).